A 217-amino-acid polypeptide reads, in one-letter code: Uracil-DNA glycosylase (217 aa).

Asp-62 acts as the Proton acceptor in catalysis.

It belongs to the uracil-DNA glycosylase (UDG) superfamily. UNG family.

It localises to the cytoplasm. It catalyses the reaction Hydrolyzes single-stranded DNA or mismatched double-stranded DNA and polynucleotides, releasing free uracil.. Functionally, excises uracil residues from the DNA which can arise as a result of misincorporation of dUMP residues by DNA polymerase or due to deamination of cytosine. The sequence is that of Uracil-DNA glycosylase from Streptococcus thermophilus (strain ATCC BAA-491 / LMD-9).